Consider the following 129-residue polypeptide: Histone H2A-III (129 aa).

This sequence belongs to the histone H2A family. The nucleosome is a histone octamer containing two molecules each of H2A, H2B, H3 and H4 assembled in one H3-H4 heterotetramer and two H2A-H2B heterodimers. The octamer wraps approximately 147 bp of DNA.

It localises to the nucleus. The protein localises to the chromosome. Functionally, core component of nucleosome. Nucleosomes wrap and compact DNA into chromatin, limiting DNA accessibility to the cellular machineries which require DNA as a template. Histones thereby play a central role in transcription regulation, DNA repair, DNA replication and chromosomal stability. DNA accessibility is regulated via a complex set of post-translational modifications of histones, also called histone code, and nucleosome remodeling. This Volvox carteri (Green alga) protein is Histone H2A-III.